The sequence spans 294 residues: Probable aspartoacylase (294 aa).

Histidine 14 and glutamate 17 together coordinate Zn(2+). Residues arginine 56 and 63–64 (NR) each bind substrate. Histidine 106 is a Zn(2+) binding site. Substrate-binding residues include glutamate 164 and tyrosine 275.

This sequence belongs to the AspA/AstE family. Aspartoacylase subfamily. Zn(2+) serves as cofactor.

It carries out the reaction an N-acyl-L-aspartate + H2O = a carboxylate + L-aspartate. The polypeptide is Probable aspartoacylase (Nostoc sp. (strain PCC 7120 / SAG 25.82 / UTEX 2576)).